The primary structure comprises 376 residues: Peroxisomal membrane protein PEX27 (376 aa).

Homooligomer. Interacts with PEX25 and PEX34.

It localises to the peroxisome membrane. Its function is as follows. Required for regulation of peroxisome size and number. Also promotes peroxisome division and biogenesis. This Saccharomyces cerevisiae (strain ATCC 204508 / S288c) (Baker's yeast) protein is Peroxisomal membrane protein PEX27 (PEX27).